Here is a 432-residue protein sequence, read N- to C-terminus: Trigger factor (432 aa).

Residues 161–246 (EDRVTIDFSG…LKKVEERELP (86 aa)) enclose the PPIase FKBP-type domain.

The protein belongs to the FKBP-type PPIase family. Tig subfamily.

Its subcellular location is the cytoplasm. The catalysed reaction is [protein]-peptidylproline (omega=180) = [protein]-peptidylproline (omega=0). In terms of biological role, involved in protein export. Acts as a chaperone by maintaining the newly synthesized protein in an open conformation. Functions as a peptidyl-prolyl cis-trans isomerase. This Enterobacter sp. (strain 638) protein is Trigger factor.